The primary structure comprises 593 residues: Cytochrome c oxidase polypeptide 1 (593 aa).

A run of 2 helical transmembrane segments spans residues 5 to 25 (ASSI…VAVL) and 71 to 91 (IGIL…VSVL). His117 is a binding site for Fe(II)-heme a. 6 consecutive transmembrane segments (helical) span residues 122 to 142 (LFLF…PLLI), 154 to 174 (AIAF…FLIP), 204 to 224 (GLHL…ATIF), 246 to 266 (QSGL…MLLL), 288 to 308 (LFWF…MGIV), and 320 to 340 (LFGF…SFGV). 2 residues coordinate Cu cation: His294 and Tyr298. The segment at residues 294 to 298 (HPEVY) is a cross-link (1'-histidyl-3'-tyrosine (His-Tyr)). The Cu cation site is built by His343 and His344. 5 helical membrane passes run 358–378 (FMAV…NWIT), 401–421 (FIIG…LILH), 425–445 (YVVG…LFAA), 467–487 (FWTA…LGYG), and 506–526 (LATV…FNMA). His429 lines the heme a3 pocket. His431 lines the Fe(II)-heme a pocket. The segment at 562-593 (TTVLPDGGDEAQSEADAVTDGGQPAADSDTES) is disordered.

It belongs to the heme-copper respiratory oxidase family.

Its subcellular location is the cell membrane. It carries out the reaction 4 Fe(II)-[cytochrome c] + O2 + 8 H(+)(in) = 4 Fe(III)-[cytochrome c] + 2 H2O + 4 H(+)(out). Its pathway is energy metabolism; oxidative phosphorylation. In terms of biological role, cytochrome c oxidase is the component of the respiratory chain that catalyzes the reduction of oxygen to water. Subunits 1-3 form the functional core of the enzyme complex. CO I is the catalytic subunit of the enzyme. Electrons originating in cytochrome c are transferred via the copper A center of subunit 2 and heme A of subunit 1 to the bimetallic center formed by heme A3 and copper B. The protein is Cytochrome c oxidase polypeptide 1 (coxA2) of Halobacterium salinarum (strain ATCC 700922 / JCM 11081 / NRC-1) (Halobacterium halobium).